Here is a 401-residue protein sequence, read N- to C-terminus: MSFDLASRLAARRAEDLYRQRPLLQSAQGPDVVVDGQPLLAFCSNDYLGLASHPEVIAALRAGAERWGVGGGASHLVVGHSGPHHELELALAEFTGRPRALLFSTGYMANLGAVTALVGKGDTVLEDRLNHASLLDAGLLSGARFSRYLHNDPASLAARLDKAEGNTLVVTDGVFSMDGNLADLPALAAVAQARGAWLMVDDAHGFGPLGAAGGGIVEHFGLGQEQVPVLIGTLGKGFGTAGAFVAGSEELIETLVQYARPYIYTTSQPPAVACATLKSLELLRRESWRREHLAALIARFRRGAEALGLTLMDSFTPIQPILVGGSRQAVALADMLRARGIMVGAIRPPTVPANSARLRVTLSAAHSEAQVDRLLEALGESWRQLSSSLLAEIEAEEGDDA.

A substrate-binding site is contributed by Arg-19. A pyridoxal 5'-phosphate-binding site is contributed by 106–107 (GY). His-131 contributes to the substrate binding site. 3 residues coordinate pyridoxal 5'-phosphate: Ser-176, His-204, and Thr-233. Lys-236 is modified (N6-(pyridoxal phosphate)lysine). A substrate-binding site is contributed by Thr-350.

This sequence belongs to the class-II pyridoxal-phosphate-dependent aminotransferase family. BioF subfamily. Homodimer. Requires pyridoxal 5'-phosphate as cofactor.

The catalysed reaction is 6-carboxyhexanoyl-[ACP] + L-alanine + H(+) = (8S)-8-amino-7-oxononanoate + holo-[ACP] + CO2. Its pathway is cofactor biosynthesis; biotin biosynthesis. Its function is as follows. Catalyzes the decarboxylative condensation of pimeloyl-[acyl-carrier protein] and L-alanine to produce 8-amino-7-oxononanoate (AON), [acyl-carrier protein], and carbon dioxide. This is 8-amino-7-oxononanoate synthase from Pseudomonas paraeruginosa (strain DSM 24068 / PA7) (Pseudomonas aeruginosa (strain PA7)).